Consider the following 298-residue polypeptide: Protease HtpX homolog (298 aa).

2 consecutive transmembrane segments (helical) span residues 15–35 and 39–59; these read LIMV…GYLF and PWMG…IMWQ. Histidine 143 serves as a coordination point for Zn(2+). Glutamate 144 is a catalytic residue. Histidine 147 lines the Zn(2+) pocket. 2 helical membrane-spanning segments follow: residues 153 to 173 and 197 to 217; these read ILLS…SGMA and MIFK…SASL. Glutamate 227 provides a ligand contact to Zn(2+).

It belongs to the peptidase M48B family. The cofactor is Zn(2+).

It localises to the cell membrane. This Lactobacillus helveticus (strain DPC 4571) protein is Protease HtpX homolog.